A 55-amino-acid chain; its full sequence is Large ribosomal subunit protein bL33 (55 aa).

It belongs to the bacterial ribosomal protein bL33 family.

The polypeptide is Large ribosomal subunit protein bL33 (Methylorubrum extorquens (strain CM4 / NCIMB 13688) (Methylobacterium extorquens)).